Consider the following 485-residue polypeptide: GTPase Obg (485 aa).

Residues 2 to 159 (PRFVDRVVIH…RELTLELKTV (158 aa)) enclose the Obg domain. Residues 160-341 (ADVGLIGFPS…FIFALWDMVR (182 aa)) form the OBG-type G domain. Residues 166–173 (GFPSAGKS), 191–195 (FTTLV), 212–215 (DVPG), 292–295 (NKID), and 322–324 (STV) each bind GTP. Ser173 and Thr193 together coordinate Mg(2+). The region spanning 359 to 437 (PIAVDETGFS…IGDMTFDWEP (79 aa)) is the OCT domain. The disordered stretch occupies residues 439 to 485 (TPAGVDVQMSGRGTDTRLEQTDRVSAAERKIARRERRQSTDEPGGEE). A compositionally biased stretch (basic and acidic residues) spans 452–468 (TDTRLEQTDRVSAAERK).

This sequence belongs to the TRAFAC class OBG-HflX-like GTPase superfamily. OBG GTPase family. As to quaternary structure, monomer. Requires Mg(2+) as cofactor.

It is found in the cytoplasm. In terms of biological role, an essential GTPase which binds GTP, GDP and possibly (p)ppGpp with moderate affinity, with high nucleotide exchange rates and a fairly low GTP hydrolysis rate. Plays a role in control of the cell cycle, stress response, ribosome biogenesis and in those bacteria that undergo differentiation, in morphogenesis control. In Mycobacterium sp. (strain MCS), this protein is GTPase Obg.